An 841-amino-acid chain; its full sequence is Probable alpha-glucuronidase A (841 aa).

A signal peptide spans 1-19 (MLRLPLVLVWSLWASLTVA). 12 N-linked (GlcNAc...) asparagine glycosylation sites follow: Asn-50, Asn-104, Asn-223, Asn-280, Asn-311, Asn-344, Asn-466, Asn-528, Asn-577, Asn-683, Asn-724, and Asn-733.

This sequence belongs to the glycosyl hydrolase 67 family.

It localises to the secreted. It carries out the reaction an alpha-D-glucuronoside + H2O = D-glucuronate + an alcohol. Alpha-glucuronidase involved in the hydrolysis of xylan, a major structural heterogeneous polysaccharide found in plant biomass representing the second most abundant polysaccharide in the biosphere, after cellulose. Releases 4-O-methylglucuronic acid from xylan. The polypeptide is Probable alpha-glucuronidase A (aguA) (Aspergillus terreus (strain NIH 2624 / FGSC A1156)).